The sequence spans 358 residues: Aromatic amino acid aminotransferase (358 aa).

Position 214 is an N6-(pyridoxal phosphate)lysine (Lys214).

This sequence belongs to the class-II pyridoxal-phosphate-dependent aminotransferase family. As to quaternary structure, homodimer. The cofactor is pyridoxal 5'-phosphate.

The enzyme catalyses an aromatic L-alpha-amino acid + 2-oxoglutarate = an aromatic oxo-acid + L-glutamate. Functionally, aminotransferase that catalyzes the conversion of aromatic amino acids and 2-oxoglutarate into corresponding aromatic oxo acids and L-glutamate. This Rhodococcus jostii (strain RHA1) protein is Aromatic amino acid aminotransferase.